A 283-amino-acid chain; its full sequence is Phosphatidylglycerol--prolipoprotein diacylglyceryl transferase (283 aa).

The next 7 membrane-spanning stretches (helical) occupy residues 21-41 (LAVR…LWLA), 60-80 (LLFA…VLFY), 95-115 (VWTG…AMLW), 124-144 (FFTI…AGRL), 176-196 (SQLY…NWFI), 203-223 (GAVS…VEYV), and 239-259 (MGQI…LWAF). Arg143 is a binding site for a 1,2-diacyl-sn-glycero-3-phospho-(1'-sn-glycerol).

This sequence belongs to the Lgt family.

It is found in the cell inner membrane. It catalyses the reaction L-cysteinyl-[prolipoprotein] + a 1,2-diacyl-sn-glycero-3-phospho-(1'-sn-glycerol) = an S-1,2-diacyl-sn-glyceryl-L-cysteinyl-[prolipoprotein] + sn-glycerol 1-phosphate + H(+). It functions in the pathway protein modification; lipoprotein biosynthesis (diacylglyceryl transfer). In terms of biological role, catalyzes the transfer of the diacylglyceryl group from phosphatidylglycerol to the sulfhydryl group of the N-terminal cysteine of a prolipoprotein, the first step in the formation of mature lipoproteins. In Aliivibrio fischeri (strain MJ11) (Vibrio fischeri), this protein is Phosphatidylglycerol--prolipoprotein diacylglyceryl transferase.